Reading from the N-terminus, the 437-residue chain is Indole diterpene prenyltransferase anaPT (437 aa).

The segment at 1–28 (MSPLSMQTDSVQGTAENKSLETNGTSND) is disordered. L-tryptophan contacts are provided by residues 102–103 (GF) and E111. R124, K208, Y210, Y282, Q355, Y357, Y422, and Y426 together coordinate dimethylallyl diphosphate.

The protein belongs to the tryptophan dimethylallyltransferase family.

The enzyme catalyses (R)-benzodiazepinedione + dimethylallyl diphosphate = (2R,3S,11R)-aszonalenin + diphosphate. It carries out the reaction (S)-benzodiazepinedione + dimethylallyl diphosphate = (2R,3S,11S)-aszonalenin + diphosphate. It functions in the pathway alkaloid biosynthesis. Indole diterpene prenyltransferase; part of the gene cluster that mediates the biosynthesis of the prenylated pyrroloindoline diketopiperazine acetylaszonalenin. The first step in the pathway is the formation of (R)-benzodiazepinedione by condensation of tryptophan and anthranilic acid catalyzed by the non-ribosomal peptide synthetase anaPS. The prenyltransferase anaPT then converts (R)-benzodiazepinedione to aszonalenin in the presence of dimethylallyl diphosphate (DMAPP) via C3-prenylation. The last step in the biosynthesis of acetylaszonalenin via acetylation of aszonalenin at position N1 catalyzed by anaAT. This Neosartorya fischeri (strain ATCC 1020 / DSM 3700 / CBS 544.65 / FGSC A1164 / JCM 1740 / NRRL 181 / WB 181) (Aspergillus fischerianus) protein is Indole diterpene prenyltransferase anaPT.